Reading from the N-terminus, the 813-residue chain is Ribonuclease R (813 aa).

In terms of domain architecture, RNB spans 260–587 (RVDLRDLPLV…LHRAIKYLLA (328 aa)). K544 is subject to N6-acetyllysine. Positions 644–725 (GNVFKGVISS…DERKIDFSLI (82 aa)) constitute an S1 motif domain. The disordered stretch occupies residues 733–813 (NVGKTAREKA…KRAAKKKVAE (81 aa)). Basic and acidic residues-rich tracts occupy residues 737–749 (TARE…DAGK) and 761–774 (VNFE…GEKK). Residues 775–791 (TKPKAAKKDARKAKKPS) show a composition bias toward basic residues. Residues 792 to 801 (AKTQKIAAAT) show a composition bias toward low complexity. Positions 802–813 (KAKRAAKKKVAE) are enriched in basic residues.

This sequence belongs to the RNR ribonuclease family. RNase R subfamily. Monomer.

It is found in the cytoplasm. The catalysed reaction is Exonucleolytic cleavage in the 3'- to 5'-direction to yield nucleoside 5'-phosphates.. In terms of biological role, 3'-5' exoribonuclease that releases 5'-nucleoside monophosphates and is involved in maturation of structured RNAs. Required for the expression of virulence genes on the large plasmid of S.flexneri at the post-transcriptional level. The sequence is that of Ribonuclease R from Shigella flexneri.